Consider the following 301-residue polypeptide: Phosphoribosylaminoimidazole-succinocarboxamide synthase (301 aa).

Belongs to the SAICAR synthetase family.

It catalyses the reaction 5-amino-1-(5-phospho-D-ribosyl)imidazole-4-carboxylate + L-aspartate + ATP = (2S)-2-[5-amino-1-(5-phospho-beta-D-ribosyl)imidazole-4-carboxamido]succinate + ADP + phosphate + 2 H(+). The protein operates within purine metabolism; IMP biosynthesis via de novo pathway; 5-amino-1-(5-phospho-D-ribosyl)imidazole-4-carboxamide from 5-amino-1-(5-phospho-D-ribosyl)imidazole-4-carboxylate: step 1/2. The protein is Phosphoribosylaminoimidazole-succinocarboxamide synthase of Mycolicibacterium vanbaalenii (strain DSM 7251 / JCM 13017 / BCRC 16820 / KCTC 9966 / NRRL B-24157 / PYR-1) (Mycobacterium vanbaalenii).